Reading from the N-terminus, the 381-residue chain is Selenoprotein P (381 aa).

Positions 1-19 (MWRSLGLALALCLLPLGGT) are cleaved as a signal peptide. An N-linked (GlcNAc...) asparagine glycan is attached at Asn-46. Position 59 (Sec-59) is a non-standard amino acid, selenocysteine. N-linked (GlcNAc...) asparagine glycans are attached at residues Asn-83, Asn-119, and Asn-128. Positions 202–268 (SPHYHHEHHH…ENRDMPGSED (67 aa)) are disordered. Positions 204–217 (HYHHEHHHNHRHQH) are enriched in basic residues. The span at 218–229 (LGSSELSENQQP) shows a compositional bias: polar residues. The span at 243 to 255 (LHHHHKHKGQHRQ) shows a compositional bias: basic residues. Phosphoserine is present on Ser-266. Non-standard amino acids (selenocysteine) are located at Sec-318 and Sec-330. Asn-338 is a glycosylation site (N-linked (GlcNAc...) asparagine). 6 non-standard amino acids (selenocysteine) are found at residues Sec-345, Sec-352, Sec-367, Sec-369, Sec-376, and Sec-378. The segment at 352–381 (UQISQQLIPTEASTSURUKNQAKKUEUPSN) is disordered. Residues 353 to 369 (QISQQLIPTEASTSURU) are compositionally biased toward polar residues.

Belongs to the selenoprotein P family. Phosphorylation sites are present in the extracellular medium.

Its subcellular location is the secreted. In terms of biological role, might be responsible for some of the extracellular antioxidant defense properties of selenium or might be involved in the transport of selenium. May supply selenium to tissues such as brain and testis. This is Selenoprotein P from Pongo abelii (Sumatran orangutan).